The primary structure comprises 905 residues: Phosphatidylethanolamine N-methyltransferase (905 aa).

2 stretches are compositionally biased toward polar residues: residues 1 to 22 and 40 to 58; these read MTNQ…STSV and DSNG…SSLN. The segment at 1–73 is disordered; sequence MTNQIPSASS…SEPERYGCTP (73 aa). Topologically, residues 1-104 are lumenal; that stretch reads MTNQIPSASS…DPRFSKTPWD (104 aa). The chain crosses the membrane as a helical span at residues 105–125; it reads WIVISSILAQVLLFFMTTGAV. At 126–128 the chain is on the cytoplasmic side; sequence RRY. The helical transmembrane segment at 129–149 threads the bilayer; the sequence is SMMLCFFFWRISYDAGIGFLL. At 150–209 the chain is on the lumenal side; sequence HMQSNHRKVVTWISDFGFFDKENHPKLYDLTKKQLISKMDSSYNYDTSPLEFNSWLVFRH. The chain crosses the membrane as a helical span at residues 210 to 230; that stretch reads FVDLILMCDFCSYILMGLAWT. Residues 231–236 are Cytoplasmic-facing; sequence CWPKVN. Residues 237–257 traverse the membrane as a helical segment; that stretch reads IILQFLRIFGGIALIVFNYWV. At 258-268 the chain is on the lumenal side; sequence KMDAHRVVRDY. A helical membrane pass occupies residues 269-289; the sequence is AWYWGDFFFLLRSSLVFNGVF. Topologically, residues 290–313 are cytoplasmic; that stretch reads ELAPHPMYSVGYAGYYGMSLLTGS. The helical transmembrane segment at 314–334 threads the bilayer; the sequence is YAVLFASILAHAAQFGFLLFV. The Lumenal portion of the chain corresponds to 335–379; it reads ENPHIERTYGTDINHARLSPRGEDNEFELPPEHDLVGFVNFDFTR. At S353 the chain carries Phosphoserine. Residues 380–400 traverse the membrane as a helical segment; that stretch reads ISDVALLIIALYSIFIILLSS. Residues 401 to 408 lie on the Cytoplasmic side of the membrane; sequence NSHYSQFW. A helical membrane pass occupies residues 409–429; it reads AIFQAFVWRFLHSIIHAFILF. The Lumenal segment spans residues 430 to 456; that stretch reads YQSKSKAWTKHFIRNGESAAYAWSQWK. A helical membrane pass occupies residues 457-479; the sequence is GLYNLTLNMSYISFVMAAWKLYH. The Cytoplasmic segment spans residues 480–493; sequence LPSNWTYGLVSLRH. The helical transmembrane segment at 494–514 threads the bilayer; it reads ALGFGLIALHIYTSVSIYEDL. At 515–552 the chain is on the lumenal side; sequence GQYGWFYGDFFLPSRSPKLVYQGIYRYVNNPERFLGCS. The chain crosses the membrane as a helical span at residues 553–573; sequence AYWGLALISSSAWIFLIAILA. Over 574–905 the chain is Cytoplasmic; sequence QLSNLAIIRL…FDGPSGAKDD (332 aa).

Belongs to the class VI-like SAM-binding methyltransferase superfamily. CHO2 family.

The protein resides in the endoplasmic reticulum membrane. It catalyses the reaction a 1,2-diacyl-sn-glycero-3-phosphoethanolamine + S-adenosyl-L-methionine = a 1,2-diacyl-sn-glycero-3-phospho-N-methylethanolamine + S-adenosyl-L-homocysteine + H(+). Its pathway is phospholipid metabolism; phosphatidylcholine biosynthesis. Catalyzes the first step of the methylation pathway of phosphatidylcholine biosynthesis, the SAM-dependent methylation of phosphatidylethanolamine (PE) to phosphatidylmonomethylethanolamine (PMME). In Schizosaccharomyces pombe (strain 972 / ATCC 24843) (Fission yeast), this protein is Phosphatidylethanolamine N-methyltransferase.